Consider the following 208-residue polypeptide: Inosine triphosphate pyrophosphatase (208 aa).

Alanine 2 is subject to N-acetylalanine. An ITP-binding site is contributed by 14–19; that stretch reads TGNAKK. Residue glutamate 44 coordinates Mg(2+). ITP-binding positions include lysine 56, 72 to 73, lysine 89, 149 to 152, lysine 172, and 177 to 178; these read DT, FGWD, and HR.

Belongs to the HAM1 NTPase family. Homodimer. Mg(2+) is required as a cofactor. Requires Mn(2+) as cofactor.

Its subcellular location is the cytoplasm. It catalyses the reaction ITP + H2O = IMP + diphosphate + H(+). The catalysed reaction is dITP + H2O = dIMP + diphosphate + H(+). The enzyme catalyses XTP + H2O = XMP + diphosphate + H(+). It carries out the reaction N(6)-hydroxy-dATP + H2O = N(6)-hydroxy-dAMP + diphosphate + H(+). Functionally, pyrophosphatase that hydrolyzes the non-canonical purine nucleotides inosine triphosphate (ITP), deoxyinosine triphosphate (dITP) as well as 2'-deoxy-N-6-hydroxylaminopurine triphosphate (dHAPTP) and xanthosine 5'-triphosphate (XTP) to their respective monophosphate derivatives. The enzyme does not distinguish between the deoxy- and ribose forms. Probably excludes non-canonical purines from RNA and DNA precursor pools, thus preventing their incorporation into RNA and DNA and avoiding chromosomal lesions. This Bos taurus (Bovine) protein is Inosine triphosphate pyrophosphatase.